The following is a 156-amino-acid chain: Large ribosomal subunit protein uL15 (156 aa).

The segment at 26–46 (GIGCGKGKTSGRGHKGQKARS) is disordered. Residues 34 to 43 (TSGRGHKGQK) are compositionally biased toward basic residues.

It belongs to the universal ribosomal protein uL15 family. As to quaternary structure, part of the 50S ribosomal subunit.

Functionally, binds to the 23S rRNA. This Ehrlichia canis (strain Jake) protein is Large ribosomal subunit protein uL15.